A 383-amino-acid chain; its full sequence is Succinyl-diaminopimelate desuccinylase (383 aa).

H79 contacts Zn(2+). Residue D81 is part of the active site. Residue D110 coordinates Zn(2+). E141 serves as the catalytic Proton acceptor. Zn(2+) contacts are provided by E142, E170, and H355.

It belongs to the peptidase M20A family. DapE subfamily. In terms of assembly, homodimer. Zn(2+) serves as cofactor. Requires Co(2+) as cofactor.

It carries out the reaction N-succinyl-(2S,6S)-2,6-diaminopimelate + H2O = (2S,6S)-2,6-diaminopimelate + succinate. It functions in the pathway amino-acid biosynthesis; L-lysine biosynthesis via DAP pathway; LL-2,6-diaminopimelate from (S)-tetrahydrodipicolinate (succinylase route): step 3/3. Its function is as follows. Catalyzes the hydrolysis of N-succinyl-L,L-diaminopimelic acid (SDAP), forming succinate and LL-2,6-diaminopimelate (DAP), an intermediate involved in the bacterial biosynthesis of lysine and meso-diaminopimelic acid, an essential component of bacterial cell walls. The sequence is that of Succinyl-diaminopimelate desuccinylase from Helicobacter pylori (strain P12).